The sequence spans 521 residues: Bifunctional purine biosynthesis protein PurH (521 aa).

The 145-residue stretch at 1-145 folds into the MGS-like domain; the sequence is MIKQALISVS…KNHRDVTVIV (145 aa).

Belongs to the PurH family.

The enzyme catalyses (6R)-10-formyltetrahydrofolate + 5-amino-1-(5-phospho-beta-D-ribosyl)imidazole-4-carboxamide = 5-formamido-1-(5-phospho-D-ribosyl)imidazole-4-carboxamide + (6S)-5,6,7,8-tetrahydrofolate. The catalysed reaction is IMP + H2O = 5-formamido-1-(5-phospho-D-ribosyl)imidazole-4-carboxamide. The protein operates within purine metabolism; IMP biosynthesis via de novo pathway; 5-formamido-1-(5-phospho-D-ribosyl)imidazole-4-carboxamide from 5-amino-1-(5-phospho-D-ribosyl)imidazole-4-carboxamide (10-formyl THF route): step 1/1. It functions in the pathway purine metabolism; IMP biosynthesis via de novo pathway; IMP from 5-formamido-1-(5-phospho-D-ribosyl)imidazole-4-carboxamide: step 1/1. This chain is Bifunctional purine biosynthesis protein PurH, found in Burkholderia multivorans (strain ATCC 17616 / 249).